We begin with the raw amino-acid sequence, 352 residues long: Homeobox protein Mohawk (352 aa).

Residues 19-53 (GASERERGGRPYSGVLDSPHARPEVGIADGPPLKD) are disordered. Positions 71–132 (VRHKRQALQD…NARRRLKNTV (62 aa)) form a DNA-binding region, homeobox; TALE-type. Disordered stretches follow at residues 157–194 (LSVSSDDSCSEGGENPPRTHMNEGGYNTPVHHPVIKSE) and 245–272 (TRQRNHSGSFSSNEFEEELVSPSSSETE).

The protein belongs to the TALE/IRO homeobox family.

It is found in the nucleus. In terms of biological role, may act as a morphogenetic regulator of cell adhesion. The chain is Homeobox protein Mohawk (MKX) from Pongo abelii (Sumatran orangutan).